Reading from the N-terminus, the 161-residue chain is Blue copper protein 1a (161 aa).

A signal peptide spans 1 to 23 (MASSRVVLILSISMVLLSSVAIA). Residues 24 to 124 (TDHIVGDDKG…QMKLVITVLA (101 aa)) form the Phytocyanin domain. A Cu cation-binding site is contributed by His64. A glycan (N-linked (GlcNAc...) asparagine) is linked at Asn70. Cys77 and Cys111 are joined by a disulfide. 3 residues coordinate Cu cation: Cys105, His110, and Met116. Residues 141–161 (VVSSLFGVVMAIMVAIAVIFA) form a helical membrane-spanning segment.

The protein localises to the membrane. This Medicago truncatula (Barrel medic) protein is Blue copper protein 1a.